We begin with the raw amino-acid sequence, 227 residues long: Germin-like protein subfamily 1 member 6 (227 aa).

An N-terminal signal peptide occupies residues 1–25 (MMEVLLRLLVTQVILLALATSFVSC). The cysteines at positions 35 and 51 are disulfide-linked. A Cupin type-1 domain is found at 65–216 (SGLNIARNTT…AFQLDVKLVR (152 aa)). N-linked (GlcNAc...) asparagine glycosylation is found at asparagine 72 and asparagine 80. Mn(2+) contacts are provided by histidine 113, histidine 115, glutamate 120, and histidine 162.

It belongs to the germin family. In terms of assembly, oligomer (believed to be a pentamer but probably hexamer).

Its subcellular location is the secreted. The protein resides in the extracellular space. It is found in the apoplast. Its function is as follows. May play a role in plant defense. Probably has no oxalate oxidase activity even if the active site is conserved. The chain is Germin-like protein subfamily 1 member 6 from Arabidopsis thaliana (Mouse-ear cress).